Consider the following 164-residue polypeptide: Protein PPLZ02 (164 aa).

A DNA-binding region (AP2/ERF) is located at residues 7–64; the sequence is RYRGFRQRHWGSWVSEIRHSILKTRIWQGTFESAEDAARAYDEAARLMCGTRARTNFP.

It localises to the nucleus. Essential for all lupin cells independent of the respective tissue. The polypeptide is Protein PPLZ02 (PPLZ02) (Lupinus polyphyllus (Large-leaved lupine)).